Here is a 60-residue protein sequence, read N- to C-terminus: Large ribosomal subunit protein uL30 (60 aa).

It belongs to the universal ribosomal protein uL30 family. Part of the 50S ribosomal subunit.

This is Large ribosomal subunit protein uL30 from Streptomyces coelicolor (strain ATCC BAA-471 / A3(2) / M145).